Here is a 229-residue protein sequence, read N- to C-terminus: Small ribosomal subunit protein uS2c (229 aa).

Belongs to the universal ribosomal protein uS2 family.

It localises to the plastid. The protein localises to the chloroplast. The protein is Small ribosomal subunit protein uS2c (rps2) of Emiliania huxleyi (Coccolithophore).